The primary structure comprises 147 residues: D-aminoacyl-tRNA deacylase (147 aa).

Residues 136-137 (GP) carry the Gly-cisPro motif, important for rejection of L-amino acids motif.

This sequence belongs to the DTD family. In terms of assembly, homodimer.

Its subcellular location is the cytoplasm. It catalyses the reaction glycyl-tRNA(Ala) + H2O = tRNA(Ala) + glycine + H(+). The catalysed reaction is a D-aminoacyl-tRNA + H2O = a tRNA + a D-alpha-amino acid + H(+). Its function is as follows. An aminoacyl-tRNA editing enzyme that deacylates mischarged D-aminoacyl-tRNAs. Also deacylates mischarged glycyl-tRNA(Ala), protecting cells against glycine mischarging by AlaRS. Acts via tRNA-based rather than protein-based catalysis; rejects L-amino acids rather than detecting D-amino acids in the active site. By recycling D-aminoacyl-tRNA to D-amino acids and free tRNA molecules, this enzyme counteracts the toxicity associated with the formation of D-aminoacyl-tRNA entities in vivo and helps enforce protein L-homochirality. The polypeptide is D-aminoacyl-tRNA deacylase (Streptococcus pneumoniae (strain P1031)).